A 405-amino-acid chain; its full sequence is Multifunctional CCA protein (405 aa).

ATP-binding residues include Gly-8 and Arg-11. CTP contacts are provided by Gly-8 and Arg-11. The Mg(2+) site is built by Asp-21 and Asp-23. The ATP site is built by Arg-91, Arg-137, and Arg-140. Positions 91, 137, and 140 each coordinate CTP. The 102-residue stretch at 225–326 folds into the HD domain; sequence TGVHAMLVLD…LRLLRECDAL (102 aa).

This sequence belongs to the tRNA nucleotidyltransferase/poly(A) polymerase family. Bacterial CCA-adding enzyme type 1 subfamily. In terms of assembly, monomer. Can also form homodimers and oligomers. Requires Mg(2+) as cofactor. Ni(2+) serves as cofactor.

It carries out the reaction a tRNA precursor + 2 CTP + ATP = a tRNA with a 3' CCA end + 3 diphosphate. It catalyses the reaction a tRNA with a 3' CCA end + 2 CTP + ATP = a tRNA with a 3' CCACCA end + 3 diphosphate. Functionally, catalyzes the addition and repair of the essential 3'-terminal CCA sequence in tRNAs without using a nucleic acid template. Adds these three nucleotides in the order of C, C, and A to the tRNA nucleotide-73, using CTP and ATP as substrates and producing inorganic pyrophosphate. tRNA 3'-terminal CCA addition is required both for tRNA processing and repair. Also involved in tRNA surveillance by mediating tandem CCA addition to generate a CCACCA at the 3' terminus of unstable tRNAs. While stable tRNAs receive only 3'-terminal CCA, unstable tRNAs are marked with CCACCA and rapidly degraded. The chain is Multifunctional CCA protein from Laribacter hongkongensis (strain HLHK9).